Consider the following 447-residue polypeptide: DNA primase DnaG (447 aa).

The Toprim domain occupies 200–274 (DSIIVVEGRA…DIDYVARAPE (75 aa)). Residues Glu-206, Asp-248, and Asp-250 each coordinate Mg(2+).

This sequence belongs to the archaeal DnaG primase family. In terms of assembly, forms a ternary complex with MCM helicase and DNA. Component of the archaeal exosome complex. Mg(2+) is required as a cofactor.

The catalysed reaction is ssDNA + n NTP = ssDNA/pppN(pN)n-1 hybrid + (n-1) diphosphate.. In terms of biological role, RNA polymerase that catalyzes the synthesis of short RNA molecules used as primers for DNA polymerase during DNA replication. Also part of the exosome, which is a complex involved in RNA degradation. Acts as a poly(A)-binding protein that enhances the interaction between heteromeric, adenine-rich transcripts and the exosome. The polypeptide is DNA primase DnaG (Pyrococcus horikoshii (strain ATCC 700860 / DSM 12428 / JCM 9974 / NBRC 100139 / OT-3)).